The primary structure comprises 475 residues: MGSVMSLSCSKRKATSQDVECSSESRKRRKISSENDEEECCRLIPSLPDELSIQILARLPRICYSSVRLVSRRWRSAVSTSEVYSLRKELGRTEEWLYVLTKGHEDKLLWYALDPVSTKWQRLPPMPVVVYEEESRKSLSGLWNMITPSFNVGAIVRSFLGRRDSSEQMPFCGCAIGAVDGGLYVIGGLSRSKTVSCVWRFDPILNSWSEVSSMLASRAYSKTGVLNKKLYVVGGVDRGRGGLSPLQSAEVYDPSTDAWSEVPSMPFSKAQVLPNAFLADLLKPIATGMTCYNGRLCVPQSLYSWPFFVDVGGEVYDPETNLWVEMPSGMGEGWPARQAGTKLSVVVDGELYAFDPSSSMENGKIKVYDQKEDTWKVVIGEVPVYDLTDSESPYLLAGFHGKLHFITRDPNHNVTVLRADVPNIPVSSSSSSSSSVSIPHLKTNAPNKSDTVTWKLIATKDFGAAELVSCQVIDI.

The interval 1–28 (MGSVMSLSCSKRKATSQDVECSSESRKR) is disordered. Residues 41-87 (CRLIPSLPDELSIQILARLPRICYSSVRLVSRRWRSAVSTSEVYSLR) form the F-box domain. Kelch repeat units follow at residues 94 to 140 (EEWL…KSLS), 182 to 228 (GLYV…VLNK), 229 to 279 (KLYV…AFLA), 306 to 350 (PFFV…VDGE), and 352 to 401 (YAFD…GFHG).

This Arabidopsis thaliana (Mouse-ear cress) protein is F-box/kelch-repeat protein At1g22040.